Reading from the N-terminus, the 528-residue chain is Glutamyl-tRNA(Gln) amidotransferase subunit B, mitochondrial (528 aa).

Belongs to the GatB/GatE family. GatB subfamily. As to quaternary structure, subunit of the heterotrimeric GatFAB amidotransferase (AdT) complex, composed of A, B and F subunits.

It is found in the mitochondrion. The enzyme catalyses L-glutamyl-tRNA(Gln) + L-glutamine + ATP + H2O = L-glutaminyl-tRNA(Gln) + L-glutamate + ADP + phosphate + H(+). In terms of biological role, allows the formation of correctly charged Gln-tRNA(Gln) through the transamidation of misacylated Glu-tRNA(Gln) in the mitochondria. The reaction takes place in the presence of glutamine and ATP through an activated gamma-phospho-Glu-tRNA(Gln). The polypeptide is Glutamyl-tRNA(Gln) amidotransferase subunit B, mitochondrial (Clavispora lusitaniae (strain ATCC 42720) (Yeast)).